The primary structure comprises 253 residues: Exosome complex component Rrp4 (253 aa).

The S1 motif domain maps to 80 to 153; sequence GDIVIGIVVD…SRGPILTVQD (74 aa).

The protein belongs to the RRP4 family. As to quaternary structure, component of the archaeal exosome complex. Forms a trimer of Rrp4 and/or Csl4 subunits. The trimer associates with a hexameric ring-like arrangement composed of 3 Rrp41-Rrp42 heterodimers.

It localises to the cytoplasm. Functionally, non-catalytic component of the exosome, which is a complex involved in RNA degradation. Increases the RNA binding and the efficiency of RNA degradation. Confers strong poly(A) specificity to the exosome. This is Exosome complex component Rrp4 from Ignisphaera aggregans (strain DSM 17230 / JCM 13409 / AQ1.S1).